The primary structure comprises 94 residues: Neutrophil defensin 3 (94 aa).

The N-terminal stretch at 1-19 is a signal peptide; the sequence is MRTLAILAAILLVALQAQA. The propeptide occupies 20–38; it reads EPLQARADEVAAAPEQIAA. Cystine bridges form between Cys-66–Cys-94, Cys-68–Cys-83, and Cys-73–Cys-93.

It belongs to the alpha-defensin family. As to quaternary structure, dimer. In terms of assembly, (Microbial infection) Interacts with herpes virus 1 HHV-1 envelope glycoprotein B; this interaction inhibits viral infection.

It localises to the secreted. Its function is as follows. Effector molecule of the innate immune system that acts via antibiotic-like properties against a broad array of infectious agents including bacteria, fungi, and viruses. Possesses the ability to neutralize bacterial toxins such as B.anthracis lethal factor, Clostridium difficile cytotoxin B as well as leukocidin produced by Staphylococcus aureus. Also blocks herpes simplex virus infection by interacting with envelope glycoprotein B and thus preventing its binding to heparan sulfate, the receptor for attachment. The polypeptide is Neutrophil defensin 3 (DEFA3) (Homo sapiens (Human)).